Reading from the N-terminus, the 118-residue chain is Putative pterin-4-alpha-carbinolamine dehydratase (118 aa).

It belongs to the pterin-4-alpha-carbinolamine dehydratase family.

It carries out the reaction (4aS,6R)-4a-hydroxy-L-erythro-5,6,7,8-tetrahydrobiopterin = (6R)-L-erythro-6,7-dihydrobiopterin + H2O. This chain is Putative pterin-4-alpha-carbinolamine dehydratase, found in Xanthomonas euvesicatoria pv. vesicatoria (strain 85-10) (Xanthomonas campestris pv. vesicatoria).